A 361-amino-acid polypeptide reads, in one-letter code: Phospho-N-acetylmuramoyl-pentapeptide-transferase (361 aa).

The next 10 membrane-spanning stretches (helical) occupy residues 25 to 45 (RGIL…PAVI), 73 to 93 (TMGG…WGDL), 98 to 118 (VWLV…DDWI), 139 to 159 (IFGL…AAIT), 168 to 188 (IALP…IVGF), 200 to 220 (GLAI…AYAS), 237 to 257 (AGEL…FLWF), 264 to 284 (VFMG…IAVI), 289 to 309 (MVLV…IIQV), and 339 to 359 (VIVR…ATLK).

Belongs to the glycosyltransferase 4 family. MraY subfamily. Mg(2+) serves as cofactor.

Its subcellular location is the cell inner membrane. It catalyses the reaction UDP-N-acetyl-alpha-D-muramoyl-L-alanyl-gamma-D-glutamyl-meso-2,6-diaminopimeloyl-D-alanyl-D-alanine + di-trans,octa-cis-undecaprenyl phosphate = di-trans,octa-cis-undecaprenyl diphospho-N-acetyl-alpha-D-muramoyl-L-alanyl-D-glutamyl-meso-2,6-diaminopimeloyl-D-alanyl-D-alanine + UMP. It functions in the pathway cell wall biogenesis; peptidoglycan biosynthesis. In terms of biological role, catalyzes the initial step of the lipid cycle reactions in the biosynthesis of the cell wall peptidoglycan: transfers peptidoglycan precursor phospho-MurNAc-pentapeptide from UDP-MurNAc-pentapeptide onto the lipid carrier undecaprenyl phosphate, yielding undecaprenyl-pyrophosphoryl-MurNAc-pentapeptide, known as lipid I. This chain is Phospho-N-acetylmuramoyl-pentapeptide-transferase, found in Xanthomonas oryzae pv. oryzae (strain MAFF 311018).